Here is a 710-residue protein sequence, read N- to C-terminus: Adenylosuccinate synthetase (710 aa).

2 disordered regions span residues 1–53 and 84–110; these read MPVR…PQEA and DEPPHGSQKPLSVAPYTANASNSSGRS. Polar residues-rich tracts occupy residues 10–27 and 101–110; these read YNNSSPGVSNALSPSTTA and ANASNSSGRS. Residues 180 to 186 and 210 to 212 each bind GTP; these read GDEGKGK and GHT. Asp181 (proton acceptor) is an active-site residue. Residues Asp181 and Gly210 each coordinate Mg(2+). IMP contacts are provided by residues 181 to 184, 208 to 211, Thr295, Lys309, Gln421, Thr437, and Lys567; these read DEGK and NAGH. The Proton donor role is filled by His211. Residue 563-569 coordinates substrate; the sequence is AVTKKPR. GTP is bound by residues Arg569 and 697-699; that span reads GNG.

The protein belongs to the adenylosuccinate synthetase family. Homodimer. Mg(2+) is required as a cofactor.

The protein resides in the cytoplasm. It catalyses the reaction IMP + L-aspartate + GTP = N(6)-(1,2-dicarboxyethyl)-AMP + GDP + phosphate + 2 H(+). The protein operates within purine metabolism; AMP biosynthesis via de novo pathway; AMP from IMP: step 1/2. In terms of biological role, plays an important role in the salvage pathway for purine nucleotide biosynthesis. Catalyzes the first committed step in the biosynthesis of AMP from IMP. This is Adenylosuccinate synthetase (ADSS) from Leishmania donovani.